The primary structure comprises 218 residues: Capsid protein (218 aa).

N-acetylmethionine; by host is present on Met1. Residues 1–30 are disordered; the sequence is MDKSGSPNASRTSRRRRPRRGSRSASGADA. The span at 12-22 shows a compositional bias: basic residues; that stretch reads TSRRRRPRRGS.

Belongs to the cucumovirus capsid protein family.

The protein resides in the virion. Its function is as follows. Capsid protein. Probably binds RNA and plays a role in packaging. This is Capsid protein from Cucumis sativus (Cucumber).